We begin with the raw amino-acid sequence, 131 residues long: Plastocyanin (131 aa).

A signal peptide spans methionine 1–alanine 34. Positions alanine 35–glutamate 131 constitute a Plastocyanin-like domain. Cu cation is bound by residues histidine 73, cysteine 116, histidine 119, and methionine 124.

It belongs to the plastocyanin family. Cu(2+) is required as a cofactor.

It is found in the cellular thylakoid membrane. In terms of biological role, participates in electron transfer between P700 and the cytochrome b6-f complex in photosystem I. This chain is Plastocyanin (petE), found in Prochlorothrix hollandica.